The primary structure comprises 520 residues: MSDDRKAIKRALISVYDKTGLEDLAQALHRENVEIVSTGSTAAKIAELGIPVTPVEELTGFPECLEGRVKTLHPKVHAGILADTRKEDHLRQLKELEVAPFQLVVVNLYPFAETVASGADFDACVEQIDIGGPSMVRAAAKNHPSVAVVVSPNRYEDVQEALKTGGFSRAERTKLAAEAFRHTATYDVTVATWMSEQLAAEDSETEFPGWIGTTNTLSRSLRYGENPHQSAALYVGNTRGLAQAKQFHGKEMSYNNYTDSDAAWRAAWDHERPCVAIIKHANPCGIAVSDESIAAAHREAHACDSVSAFGGVIASNREVSVEMANQVAEIFTEVIIAPSYEEGAVEILSQKKNIRILQAEAPVRKGFESREISGGLLVQERDLIHAEGDNSANWTLAAGSAVSPEVLKDLEFAWTAVRSVKSNAILLAKNGATVGVGMGQVNRVDSARLAVDRAGAERATGSVAASDAFFPFADGFEVLAEAGITAVVQPGGSIRDNEVIEAANKAGVTMYLTGARHFAH.

The region spanning 1–150 is the MGS-like domain; it reads MSDDRKAIKR…KNHPSVAVVV (150 aa).

This sequence belongs to the PurH family.

The enzyme catalyses (6R)-10-formyltetrahydrofolate + 5-amino-1-(5-phospho-beta-D-ribosyl)imidazole-4-carboxamide = 5-formamido-1-(5-phospho-D-ribosyl)imidazole-4-carboxamide + (6S)-5,6,7,8-tetrahydrofolate. The catalysed reaction is IMP + H2O = 5-formamido-1-(5-phospho-D-ribosyl)imidazole-4-carboxamide. Its pathway is purine metabolism; IMP biosynthesis via de novo pathway; 5-formamido-1-(5-phospho-D-ribosyl)imidazole-4-carboxamide from 5-amino-1-(5-phospho-D-ribosyl)imidazole-4-carboxamide (10-formyl THF route): step 1/1. It functions in the pathway purine metabolism; IMP biosynthesis via de novo pathway; IMP from 5-formamido-1-(5-phospho-D-ribosyl)imidazole-4-carboxamide: step 1/1. This is Bifunctional purine biosynthesis protein PurH from Corynebacterium glutamicum (strain ATCC 13032 / DSM 20300 / JCM 1318 / BCRC 11384 / CCUG 27702 / LMG 3730 / NBRC 12168 / NCIMB 10025 / NRRL B-2784 / 534).